Here is a 290-residue protein sequence, read N- to C-terminus: Bifunctional protein FolD (290 aa).

Residues 166 to 168 and Ile-232 each bind NADP(+); that span reads GAS.

This sequence belongs to the tetrahydrofolate dehydrogenase/cyclohydrolase family. In terms of assembly, homodimer.

It catalyses the reaction (6R)-5,10-methylene-5,6,7,8-tetrahydrofolate + NADP(+) = (6R)-5,10-methenyltetrahydrofolate + NADPH. It carries out the reaction (6R)-5,10-methenyltetrahydrofolate + H2O = (6R)-10-formyltetrahydrofolate + H(+). The protein operates within one-carbon metabolism; tetrahydrofolate interconversion. Catalyzes the oxidation of 5,10-methylenetetrahydrofolate to 5,10-methenyltetrahydrofolate and then the hydrolysis of 5,10-methenyltetrahydrofolate to 10-formyltetrahydrofolate. The chain is Bifunctional protein FolD from Proteus mirabilis (strain HI4320).